Reading from the N-terminus, the 203-residue chain is Linker for activation of T-cells family member 2 (203 aa).

The Extracellular segment spans residues 1-6; it reads MSAELE. A helical; Signal-anchor for type III membrane protein transmembrane segment spans residues 7-27; it reads LLWPVSGLLLLLLGATAWLCV. Residues C26 and C29 are each lipidated (S-palmitoyl cysteine). At 28–203 the chain is on the cytoplasmic side; sequence HCSRPGVKRN…NGDVAAAENI (176 aa). Y59 is subject to Phosphotyrosine. S60 and S95 each carry phosphoserine. Residues Y139, Y160, and Y192 each carry the phosphotyrosine modification. Residues 171–203 are disordered; it reads ESKRTMGAPMSLSGSPDEEPDYVNGDVAAAENI.

When phosphorylated, interacts with GRB2. May also interact with SOS1, GAB1 and CBL. In terms of processing, phosphorylated on tyrosines following cross-linking of BCR in B-cells, high affinity IgG receptor (FCGR1) in myeloid cells, or high affinity IgE receptor (FCER1) in mast cells; which induces the recruitment of GRB2. Strongly expressed in testis. Expressed in heart, spleen and lung. Present in B-cells and mast cells (at protein level).

It localises to the cell membrane. Functionally, involved in FCER1 (high affinity immunoglobulin epsilon receptor)-mediated signaling in mast cells. May also be involved in BCR (B-cell antigen receptor)-mediated signaling in B-cells and FCGR1 (high affinity immunoglobulin gamma Fc receptor I)-mediated signaling in myeloid cells. Couples activation of these receptors and their associated kinases with distal intracellular events through the recruitment of GRB2. The protein is Linker for activation of T-cells family member 2 (Lat2) of Mus musculus (Mouse).